The chain runs to 447 residues: GTPase Der (447 aa).

2 EngA-type G domains span residues Lys-4–Glu-165 and Leu-180–Asn-357. GTP-binding positions include Gly-10–Ser-17, Asp-57–Leu-61, Asn-119–Glu-122, Gly-186–Ser-193, Asp-233–Leu-237, and Asn-298–Asp-301. Residues Lys-358 to Lys-443 enclose the KH-like domain.

Belongs to the TRAFAC class TrmE-Era-EngA-EngB-Septin-like GTPase superfamily. EngA (Der) GTPase family. As to quaternary structure, associates with the 50S ribosomal subunit.

Functionally, GTPase that plays an essential role in the late steps of ribosome biogenesis. The chain is GTPase Der from Rickettsia prowazekii (strain Madrid E).